The sequence spans 170 residues: Acetyl-CoA decarbonylase/synthase complex subunit epsilon 1 (170 aa).

The protein belongs to the CdhB family. As to quaternary structure, heterotetramer of two alpha and two epsilon subunits. The ACDS complex is made up of alpha, epsilon, beta, gamma and delta subunits with a probable stoichiometry of (alpha(2)epsilon(2))(4)-beta(8)-(gamma(1)delta(1))(8).

Its pathway is one-carbon metabolism; methanogenesis from acetate. In terms of biological role, part of a complex that catalyzes the reversible cleavage of acetyl-CoA, allowing growth on acetate as sole source of carbon and energy. The alpha-epsilon subcomponent functions as a carbon monoxide dehydrogenase. The precise role of the epsilon subunit is unclear; it may have a stabilizing role within the alpha(2)epsilon(2) component and/or be involved in electron transfer to FAD during a potential FAD-mediated CO oxidation. In Methanosarcina mazei (strain ATCC BAA-159 / DSM 3647 / Goe1 / Go1 / JCM 11833 / OCM 88) (Methanosarcina frisia), this protein is Acetyl-CoA decarbonylase/synthase complex subunit epsilon 1 (cdhB1).